The chain runs to 676 residues: UvrABC system protein B (676 aa).

The Helicase ATP-binding domain occupies 26 to 414 (EGLENGLAHQ…SDGEIAEQVV (389 aa)). 39-46 (GVTGSGKT) lines the ATP pocket. A Beta-hairpin motif is present at residues 92–115 (YFDYYQPEAYVPTTDTFIEKDSSV). Residues 432–598 (QVDDLLSEIR…ALKKDVADIL (167 aa)) form the Helicase C-terminal domain. Residues 636-671 (EKAIQKLESKMYQHAKDLEFEQAAQVRDEIDNLRKQ) form the UVR domain.

Belongs to the UvrB family. As to quaternary structure, forms a heterotetramer with UvrA during the search for lesions. Interacts with UvrC in an incision complex.

It localises to the cytoplasm. Its function is as follows. The UvrABC repair system catalyzes the recognition and processing of DNA lesions. A damage recognition complex composed of 2 UvrA and 2 UvrB subunits scans DNA for abnormalities. Upon binding of the UvrA(2)B(2) complex to a putative damaged site, the DNA wraps around one UvrB monomer. DNA wrap is dependent on ATP binding by UvrB and probably causes local melting of the DNA helix, facilitating insertion of UvrB beta-hairpin between the DNA strands. Then UvrB probes one DNA strand for the presence of a lesion. If a lesion is found the UvrA subunits dissociate and the UvrB-DNA preincision complex is formed. This complex is subsequently bound by UvrC and the second UvrB is released. If no lesion is found, the DNA wraps around the other UvrB subunit that will check the other stand for damage. The sequence is that of UvrABC system protein B from Aliivibrio fischeri (strain ATCC 700601 / ES114) (Vibrio fischeri).